The primary structure comprises 574 residues: Proline--tRNA ligase (574 aa).

This sequence belongs to the class-II aminoacyl-tRNA synthetase family. ProS type 1 subfamily. Homodimer.

The protein resides in the cytoplasm. The enzyme catalyses tRNA(Pro) + L-proline + ATP = L-prolyl-tRNA(Pro) + AMP + diphosphate. In terms of biological role, catalyzes the attachment of proline to tRNA(Pro) in a two-step reaction: proline is first activated by ATP to form Pro-AMP and then transferred to the acceptor end of tRNA(Pro). As ProRS can inadvertently accommodate and process non-cognate amino acids such as alanine and cysteine, to avoid such errors it has two additional distinct editing activities against alanine. One activity is designated as 'pretransfer' editing and involves the tRNA(Pro)-independent hydrolysis of activated Ala-AMP. The other activity is designated 'posttransfer' editing and involves deacylation of mischarged Ala-tRNA(Pro). The misacylated Cys-tRNA(Pro) is not edited by ProRS. The chain is Proline--tRNA ligase from Fervidobacterium nodosum (strain ATCC 35602 / DSM 5306 / Rt17-B1).